We begin with the raw amino-acid sequence, 240 residues long: Uridylate kinase (240 aa).

Position 12-15 (12-15 (KLSG)) interacts with ATP. Residues 20 to 25 (GEQGNG) are involved in allosteric activation by GTP. Glycine 54 is a UMP binding site. Glycine 55 and arginine 59 together coordinate ATP. UMP-binding positions include aspartate 74 and 135-142 (TGNPYFST). Residues asparagine 163, tyrosine 169, and aspartate 172 each contribute to the ATP site.

The protein belongs to the UMP kinase family. In terms of assembly, homohexamer.

The protein resides in the cytoplasm. The catalysed reaction is UMP + ATP = UDP + ADP. Its pathway is pyrimidine metabolism; CTP biosynthesis via de novo pathway; UDP from UMP (UMPK route): step 1/1. Its activity is regulated as follows. Allosterically activated by GTP. Inhibited by UTP. Functionally, catalyzes the reversible phosphorylation of UMP to UDP. The chain is Uridylate kinase from Bacillus velezensis (strain DSM 23117 / BGSC 10A6 / LMG 26770 / FZB42) (Bacillus amyloliquefaciens subsp. plantarum).